We begin with the raw amino-acid sequence, 51 residues long: Large ribosomal subunit protein eL39 (51 aa).

The disordered stretch occupies residues 32–51 (KRRVTRSPTRRHWRRVKLKA).

It belongs to the eukaryotic ribosomal protein eL39 family.

This is Large ribosomal subunit protein eL39 from Pyrobaculum arsenaticum (strain DSM 13514 / JCM 11321 / PZ6).